We begin with the raw amino-acid sequence, 335 residues long: Methionine aminopeptidase 1D, mitochondrial (335 aa).

Residues 1-19 (MAAPSGVHLLVRRGSHRIF) constitute a mitochondrion transit peptide. His161 is a substrate binding site. A divalent metal cation contacts are provided by Asp178, Asp189, and His252. His259 lines the substrate pocket. A divalent metal cation is bound by residues Glu284 and Glu315.

Belongs to the peptidase M24A family. Methionine aminopeptidase type 1 subfamily. The cofactor is Co(2+). Requires Zn(2+) as cofactor. Mn(2+) is required as a cofactor. It depends on Fe(2+) as a cofactor. As to expression, overexpressed in colon cancer cell lines and colon tumors as compared to normal tissues (at protein level).

The protein localises to the mitochondrion. It carries out the reaction Release of N-terminal amino acids, preferentially methionine, from peptides and arylamides.. Its function is as follows. Removes the N-terminal methionine from nascent proteins. The N-terminal methionine is often cleaved when the second residue in the primary sequence is small and uncharged (Met-Ala-, Cys, Gly, Pro, Ser, Thr, or Val). Requires deformylation of the N(alpha)-formylated initiator methionine before it can be hydrolyzed. May play a role in colon tumorigenesis. The polypeptide is Methionine aminopeptidase 1D, mitochondrial (METAP1D) (Homo sapiens (Human)).